The primary structure comprises 442 residues: Matrix remodeling-associated protein 8 (442 aa).

The N-terminal stretch at 1–19 (MELLSRVLLWKLLLLQSSA) is a signal peptide. Residues 20 to 340 (VLSSGPSGTA…PEDHTHFFQQ (321 aa)) lie on the Extracellular side of the membrane. Ig-like V-type domains lie at 25–156 (PSGT…LEVT) and 159–291 (PLLS…LQVT). Intrachain disulfides connect C53-C136 and C185-C271. N118 is a glycosylation site (N-linked (GlcNAc...) asparagine). The RGD 1 motif lies at 128-130 (RGD). S227 bears the Phosphoserine mark. Residues 251-253 (RGD) carry the RGD 2 motif. The segment at 296–319 (EPPARASPGNGSGHSSAPSPDPTL) is disordered. N305 is a glycosylation site (N-linked (GlcNAc...) asparagine). Residues 341–361 (LGYVLATLLLFILLLITVVLA) traverse the membrane as a helical segment. At 362 to 442 (TRYRHSGGCK…DKEFRKEYCK (81 aa)) the chain is on the cytoplasmic side.

In terms of assembly, homodimer in cis. Does not appear to form trans-homodimers. Interacts with ITGB3; the interaction inhibits ITGAV:ITGB3 heterodimer formation. As to expression, widely expressed (at protein level). Highly expressed in brain where it localizes to the glia limitans, which is formed by the endfeet of astrocytes surrounding capillaries, and beneath the pia mater (at protein level). In lung, detected in epithelial cells of the bronchus (at protein level). Expressed in intercalated disks in the heart (at protein level). Detected in pancreatic alpha-cells in the islet of Langerhans (at protein level). In kidney, found in the brush border of the proximal convoluted tubule (at protein level). Expressed in the epithelium of the small intestine (at protein level). Weakly expressed in liver (at protein level). Detected in myeloid cells.

It is found in the cell membrane. The protein resides in the cell junction. It localises to the tight junction. The protein localises to the cytoplasm. Its subcellular location is the cell projection. It is found in the cilium membrane. The protein resides in the nucleus. Transmembrane protein which can modulate activity of various signaling pathways, probably via binding to integrin ITGAV:ITGB3. Mediates heterophilic cell-cell interactions in vitro. Inhibits osteoclastogenesis downstream of TNFSF11/RANKL and CSF1, where it may function by attenuating signaling via integrin ITGB3 and MAP kinase p38. Plays a role in cartilage formation where it promotes proliferation and maturation of growth plate chondrocytes. Stimulates formation of primary cilia in chondrocytes. Enhances expression of genes involved in the hedgehog signaling pathway in chondrocytes, including the hedgehog signaling molecule IHH; may also promote signaling via the PTHLH/PTHrP pathway. Plays a role in angiogenesis where it suppresses migration of endothelial cells and also promotes their apoptosis. Inhibits VEGF-induced activation of AKT and p38 MAP kinase in endothelial cells. Also inhibits VTN (vitronectin)-mediated integrin ITGAV:ITGB3 signaling and activation of PTK2/FAK. May play a role in the maturation and maintenance of the blood-brain barrier. The protein is Matrix remodeling-associated protein 8 of Mus musculus (Mouse).